A 318-amino-acid chain; its full sequence is Acetyl-coenzyme A carboxylase carboxyl transferase subunit alpha (318 aa).

Residues 41–295 form the CoA carboxyltransferase C-terminal domain; the sequence is RLTTKSQELT…KRQLIADLGS (255 aa).

The protein belongs to the AccA family. In terms of assembly, acetyl-CoA carboxylase is a heterohexamer composed of biotin carboxyl carrier protein (AccB), biotin carboxylase (AccC) and two subunits each of ACCase subunit alpha (AccA) and ACCase subunit beta (AccD).

Its subcellular location is the cytoplasm. It catalyses the reaction N(6)-carboxybiotinyl-L-lysyl-[protein] + acetyl-CoA = N(6)-biotinyl-L-lysyl-[protein] + malonyl-CoA. The protein operates within lipid metabolism; malonyl-CoA biosynthesis; malonyl-CoA from acetyl-CoA: step 1/1. Component of the acetyl coenzyme A carboxylase (ACC) complex. First, biotin carboxylase catalyzes the carboxylation of biotin on its carrier protein (BCCP) and then the CO(2) group is transferred by the carboxyltransferase to acetyl-CoA to form malonyl-CoA. In Idiomarina loihiensis (strain ATCC BAA-735 / DSM 15497 / L2-TR), this protein is Acetyl-coenzyme A carboxylase carboxyl transferase subunit alpha.